We begin with the raw amino-acid sequence, 181 residues long: NADH-quinone oxidoreductase subunit I (181 aa).

4Fe-4S ferredoxin-type domains follow at residues 44 to 74 and 90 to 119; these read LNRYPDGLEKCIGCELCAWACPADAIYVEGA and RVYQINYLRCIGCGLCIEACPTRALTMTND. [4Fe-4S] cluster is bound by residues cysteine 54, cysteine 57, cysteine 60, cysteine 64, cysteine 99, cysteine 102, cysteine 105, and cysteine 109.

It belongs to the complex I 23 kDa subunit family. In terms of assembly, NDH-1 is composed of 14 different subunits. Subunits NuoA, H, J, K, L, M, N constitute the membrane sector of the complex. [4Fe-4S] cluster is required as a cofactor.

It localises to the cell membrane. It catalyses the reaction a quinone + NADH + 5 H(+)(in) = a quinol + NAD(+) + 4 H(+)(out). Its function is as follows. NDH-1 shuttles electrons from NADH, via FMN and iron-sulfur (Fe-S) centers, to quinones in the respiratory chain. The immediate electron acceptor for the enzyme in this species is believed to be menaquinone. Couples the redox reaction to proton translocation (for every two electrons transferred, four hydrogen ions are translocated across the cytoplasmic membrane), and thus conserves the redox energy in a proton gradient. This is NADH-quinone oxidoreductase subunit I from Mycobacterium marinum (strain ATCC BAA-535 / M).